Reading from the N-terminus, the 147-residue chain is NADH-quinone oxidoreductase subunit A (147 aa).

A run of 3 helical transmembrane segments spans residues 16–36 (FAIF…GGWF), 68–88 (FYLV…LFAW), and 97–117 (WVGF…LVYL).

The protein belongs to the complex I subunit 3 family. As to quaternary structure, NDH-1 is composed of 13 different subunits. Subunits NuoA, H, J, K, L, M, N constitute the membrane sector of the complex.

Its subcellular location is the cell inner membrane. It carries out the reaction a quinone + NADH + 5 H(+)(in) = a quinol + NAD(+) + 4 H(+)(out). Functionally, NDH-1 shuttles electrons from NADH, via FMN and iron-sulfur (Fe-S) centers, to quinones in the respiratory chain. The immediate electron acceptor for the enzyme in this species is believed to be ubiquinone. Couples the redox reaction to proton translocation (for every two electrons transferred, four hydrogen ions are translocated across the cytoplasmic membrane), and thus conserves the redox energy in a proton gradient. The sequence is that of NADH-quinone oxidoreductase subunit A from Salmonella paratyphi A (strain ATCC 9150 / SARB42).